The chain runs to 260 residues: Snake venom serine protease homolog (260 aa).

Residues 1-18 form the signal peptide; the sequence is MVLIRVLANLLILQLSYA. A propeptide spanning residues 19 to 24 is cleaved from the precursor; that stretch reads QKASEL. Positions 25–251 constitute a Peptidase S1 domain; the sequence is IIGGDECNIN…YTEWIRSIIA (227 aa). Cystine bridges form between Cys31-Cys165, Cys52-Cys68, Cys100-Cys258, Cys144-Cys212, Cys176-Cys191, and Cys202-Cys227. Asn83 carries an N-linked (GlcNAc...) asparagine glycan.

It belongs to the peptidase S1 family. Snake venom subfamily. Expressed by the venom gland.

The protein localises to the secreted. Its function is as follows. Snake venom serine protease homolog that may act in the hemostasis system of the prey. The chain is Snake venom serine protease homolog from Bothrops jararacussu (Jararacussu).